The chain runs to 2334 residues: Genome polyprotein (2334 aa).

Residues glutamine 487 to serine 647 form the SF3 helicase domain. Tyrosine 1007 is modified (O-(5'-phospho-RNA)-tyrosine). A Peptidase C24 domain is found at glycine 1102 to threonine 1237. Residues histidine 1128, aspartate 1145, and cysteine 1205 each act as for 3CLpro activity in the active site. In terms of domain architecture, RdRp catalytic spans glycine 1488–leucine 1612. Cysteine 1577 and cysteine 1584 are joined by a disulfide. Residues glutamate 1760–methionine 1784 are disordered. Residues alanine 1767 to threonine 1781 are compositionally biased toward low complexity.

It depends on Mn(2+) as a cofactor. In terms of processing, specific enzymatic cleavages by its own cysteine protease yield mature proteins. The protease cleaves itself from the nascent polyprotein autocatalytically. Precursor p41 can be cleaved by viral 3CLpro into protein p19 and VPg, or cleaved by host protease into protein p23/2 and protein p18. VPg is uridylylated by the polymerase and is covalently attached to the 5'-end of the polyadenylated genomic and subgenomic RNAs. This uridylylated form acts as a nucleotide-peptide primer for the polymerase.

It is found in the virion. The protein localises to the host cytoplasm. The catalysed reaction is a ribonucleoside 5'-triphosphate + H2O = a ribonucleoside 5'-diphosphate + phosphate + H(+). It catalyses the reaction Endopeptidase with a preference for cleavage when the P1 position is occupied by Glu-|-Xaa and the P1' position is occupied by Gly-|-Yaa.. It carries out the reaction RNA(n) + a ribonucleoside 5'-triphosphate = RNA(n+1) + diphosphate. Functionally, together with NTPase and NS4, initiates the formation of the replication complex. Induces the proliferation of the host smooth ER membranes forming long tubular structures. These remodeled membranes probably form the viral factories that contain the replication complex. Its function is as follows. Displays NTPase activity, but no helicase activity. Induces the formation of convoluted membranes derived from the host ER. These remodeled membranes probably form the viral factories that contain the replication complex. Together with NS2 and NS4, initiates the formation of the replication complex. In terms of biological role, probable key protein responsible for the formation of membrane alterations by the virus. Induces the formation of convoluted membranes derived from the host ER. These remodeled membranes probably form the viral factories that contain the replication complex. Together with NS2 and NTPase, initiates the formation of the replication complex. Viral genome-linked protein is covalently linked to the 5'-end of the positive-strand, negative-strand genomic RNAs and subgenomic RNA. Acts as a genome-linked replication primer. May recruit ribosome to viral RNA thereby promoting viral proteins translation. Interacts with host translation initiation complex to allow the translation of viral proteins. Functionally, processes the polyprotein. 3CLpro-RdRp is first released by autocleavage, then all other proteins are cleaved. May cleave polyadenylate-binding protein thereby inhibiting cellular translation. Its function is as follows. Replicates genomic and antigenomic RNA by recognizing replications specific signals. Also transcribes a subgenomic mRNA by initiating RNA synthesis internally on antigenomic RNA. This sgRNA codes for structural proteins. Catalyzes the covalent attachment VPg with viral RNAs. In terms of biological role, capsid protein VP60 self assembles to form an icosahedral capsid with a T=3 symmetry, about 35 nm in diameter, and consisting of 180 capsid proteins. A smaller form of capsid with a diameter of 23 nm might be capsid proteins assembled as icosahedron with T=1 symmetry. The capsid encapsulate VP2 proteins and genomic or subgenomic RNA. Attaches virion to target cells by binding histo-blood group antigens, inducing endocytosis of the viral particle. Acidification of the endosome induces conformational change of capsid protein thereby injecting virus genomic RNA into host cytoplasm. The polypeptide is Genome polyprotein (Lepus europaeus (European hare)).